The chain runs to 180 residues: Nucleoside triphosphate/diphosphate phosphatase (180 aa).

R26 functions as the Proton donor in the catalytic mechanism. N90, D106, D108, D110, D123, and E126 together coordinate Mg(2+).

It belongs to the Ntdp family. It depends on Mg(2+) as a cofactor.

It carries out the reaction a ribonucleoside 5'-triphosphate + H2O = a ribonucleoside 5'-diphosphate + phosphate + H(+). The enzyme catalyses a ribonucleoside 5'-diphosphate + H2O = a ribonucleoside 5'-phosphate + phosphate + H(+). In terms of biological role, has nucleoside phosphatase activity towards nucleoside triphosphates and nucleoside diphosphates. In Staphylococcus aureus (strain Mu3 / ATCC 700698), this protein is Nucleoside triphosphate/diphosphate phosphatase.